The sequence spans 169 residues: Procalin (169 aa).

Positions 1–18 are cleaved as a signal peptide; that stretch reads MKTFIVITFIGILSYAYA. 3 cysteine pairs are disulfide-bonded: cysteine 21–cysteine 125, cysteine 54–cysteine 168, and cysteine 83–cysteine 97.

This sequence belongs to the calycin superfamily. Triabin family. In terms of tissue distribution, expressed in salivary glands.

Its subcellular location is the secreted. The polypeptide is Procalin (Hospesneotomae protracta (Western bloodsucking conenose)).